Here is a 466-residue protein sequence, read N- to C-terminus: Asparagine--tRNA ligase (466 aa).

The protein belongs to the class-II aminoacyl-tRNA synthetase family. As to quaternary structure, homodimer.

It is found in the cytoplasm. The catalysed reaction is tRNA(Asn) + L-asparagine + ATP = L-asparaginyl-tRNA(Asn) + AMP + diphosphate + H(+). This Buchnera aphidicola subsp. Acyrthosiphon pisum (strain APS) (Acyrthosiphon pisum symbiotic bacterium) protein is Asparagine--tRNA ligase.